The chain runs to 435 residues: 3-phosphoshikimate 1-carboxyvinyltransferase (435 aa).

3-phosphoshikimate is bound by residues K15, S16, and R20. A phosphoenolpyruvate-binding site is contributed by K15. 2 residues coordinate phosphoenolpyruvate: G96 and R124. Positions 169, 171, 195, 318, and 345 each coordinate 3-phosphoshikimate. Phosphoenolpyruvate is bound at residue Q171. D318 serves as the catalytic Proton acceptor. Residues R349 and R393 each contribute to the phosphoenolpyruvate site.

Belongs to the EPSP synthase family. In terms of assembly, monomer.

Its subcellular location is the cytoplasm. It catalyses the reaction 3-phosphoshikimate + phosphoenolpyruvate = 5-O-(1-carboxyvinyl)-3-phosphoshikimate + phosphate. It functions in the pathway metabolic intermediate biosynthesis; chorismate biosynthesis; chorismate from D-erythrose 4-phosphate and phosphoenolpyruvate: step 6/7. Functionally, catalyzes the transfer of the enolpyruvyl moiety of phosphoenolpyruvate (PEP) to the 5-hydroxyl of shikimate-3-phosphate (S3P) to produce enolpyruvyl shikimate-3-phosphate and inorganic phosphate. The polypeptide is 3-phosphoshikimate 1-carboxyvinyltransferase (Chlorobium chlorochromatii (strain CaD3)).